We begin with the raw amino-acid sequence, 66 residues long: Large ribosomal subunit protein bL35 (66 aa).

Belongs to the bacterial ribosomal protein bL35 family.

The chain is Large ribosomal subunit protein bL35 from Methylobacterium nodulans (strain LMG 21967 / CNCM I-2342 / ORS 2060).